The sequence spans 563 residues: MSFQLDQSTSVIKTAPPGRLEFKNEPIDIASSNIQDLAKMQTLDGYYQQTSLQLPQSQQYHRMYENVYNNQQILYAQTQNFQYPSTLLTNGSLAQTEWRGQQMDTSAYSNTGYSRSSTSQQPQYTQQVTENERIVYKPVDMPSPVDSGIGGDISILNPKEEFFTSADGGSMLERSSERTLSHRDSPLVIPKLYNNLGFQYVLEAPISTSVRRDDDRMTYVNKGQFYTVSLEYTPDLNKCLKSQTVKSQLMVVFREDKTYEEEIKTWQSWHARQHVSKQRILEIDSKNSSGMIGQIEEIGNNAVQFYWNPSDPSGVRISIAVQCLSTDFSTQKGVKGLPLHVQIDTYDGENDKVPFHRGYCQIKVFCDKGAERKLRDEDKRAQKRKVQEYTAGALPGGRKKSDGEYHDQCERSEFYHMRELDKPAALFIAPEEFEPRYVDSTSLSFDMSEIEPIPTKRPRTSERIMLYVRKRDEQIYQPLHVVPASLSGLALAIANKFGADPDKMSGVYKRCAKGITVKVDDEMLRLYCNEDTFIIDVEHATDGSTAATLIEVAPTNPNSYSNS.

The 235-residue stretch at 194 to 428 (NNLGFQYVLE…ELDKPAALFI (235 aa)) folds into the Grh/CP2 DB domain. Interaction with DNA regions lie at residues 326-335 (TDFSTQKGVK) and 372-375 (RKLR). Residues 377–405 (EDKRAQKRKVQEYTAGALPGGRKKSDGEY) form a disordered region.

The protein belongs to the grh/CP2 family. Grainyhead subfamily.

It is found in the nucleus. Functionally, probable transcription factor. Binds a motif with the core sequence 5'-C[ACT][TG]G-3' in regulatory elements of target genes. Many putative target genes show oscillating expression levels, perhaps as a result of rhythmic variation in accumulation of grh-1. Plays a role in proper cuticle formation and/or barrier function and is required repetitively during development, for successful completion of each molt. Involved in modulating lifespan. Plays a role in defense response to bacteria. May act upstream of the p38 MAP kinase / pmk-1 pathway. May act downstream of the insulin/IGF-1 receptor signaling (IIS) pathway. This is Grainyhead-like protein 1 homolog from Caenorhabditis elegans.